The following is a 216-amino-acid chain: Pentapeptide repeat protein VPA0095 (216 aa).

This sequence belongs to the pentapeptide repeat protein family.

Functionally, has no effect when overexpressed in E.coli. When Cys-115 is mutated to Tyr and overexpressed it increases (fluoro)quinolone resistance in E.coli up to 16-fold for ciprofloxacin, levofloxacin and nalidixic acid. In Vibrio parahaemolyticus serotype O3:K6 (strain RIMD 2210633), this protein is Pentapeptide repeat protein VPA0095.